The chain runs to 119 residues: DNA-binding protein TubR (119 aa).

Homodimer. Binds to TubZ filaments via the C-terminus of TubZ. DNA is not required for binding to TubZ.

In terms of biological role, a DNA-binding protein that is part of the type III plasmid partition system used to ensure correct segregation of the pBc10987 plasmid. Binds TubZ filaments but does not influence the GTPase activity of TubZ with or without DNA. Cooperatively binds to multiple regions in tubC (centromere-like site) upstream of its own gene with consensus sequence N(T/A)ATTNC(C/G)GNAAT(A/T)N; probably forms an extended DNA-protein filament. Binds sites in its own promoter region and presumably represses its expression; its effect on RNA expression has not been shown. Does not specifically bind to the putative origin of replication on pBc10987. The protein is DNA-binding protein TubR of Bacillus cereus (strain ATCC 10987 / NRS 248).